The primary structure comprises 203 residues: Microtubule-associated protein Jupiter (203 aa).

Phosphoserine is present on S30. Phosphothreonine is present on residues T41 and T102. Polar residues predominate over residues 123–132; it reads LISKGNYNGK. Disordered regions lie at residues 123-163 and 182-203; these read LISK…GNPV and NGGS…SGLW. Positions 133–146 are enriched in low complexity; that stretch reads SGSVSSASSSVSSS. Phosphoserine is present on residues S135 and S146.

This sequence belongs to the MAP Jupiter family.

The protein resides in the nucleus. It is found in the cytoplasm. It localises to the cytoskeleton. The protein localises to the spindle. Binds to all microtubule populations. The polypeptide is Microtubule-associated protein Jupiter (Drosophila mojavensis (Fruit fly)).